We begin with the raw amino-acid sequence, 241 residues long: tRNA pseudouridine synthase B (241 aa).

The active-site Nucleophile is the Asp45.

It belongs to the pseudouridine synthase TruB family. Type 1 subfamily.

The enzyme catalyses uridine(55) in tRNA = pseudouridine(55) in tRNA. Its function is as follows. Responsible for synthesis of pseudouridine from uracil-55 in the psi GC loop of transfer RNAs. This is tRNA pseudouridine synthase B from Opitutus terrae (strain DSM 11246 / JCM 15787 / PB90-1).